The chain runs to 111 residues: FK506-binding protein 1 (111 aa).

The interval 1–20 (MGVEKTIITQGSGPSPQVGQ) is disordered. Positions 7 to 20 (IITQGSGPSPQVGQ) are enriched in polar residues. The 93-residue stretch at 19 to 111 (GQKVTMEYTG…IFDVELKKIG (93 aa)) folds into the PPIase FKBP-type domain.

It belongs to the FKBP-type PPIase family. FKBP1 subfamily.

It is found in the cytoplasm. It carries out the reaction [protein]-peptidylproline (omega=180) = [protein]-peptidylproline (omega=0). Inhibited by both FK506 and rapamycin. PPIases accelerate the folding of proteins. It catalyzes the cis-trans isomerization of proline imidic peptide bonds in oligopeptides. This Gibberella zeae (strain ATCC MYA-4620 / CBS 123657 / FGSC 9075 / NRRL 31084 / PH-1) (Wheat head blight fungus) protein is FK506-binding protein 1 (FPR1).